The following is a 577-amino-acid chain: Protein O-linked-mannose beta-1,4-N-acetylglucosaminyltransferase 2 (577 aa).

Over 1–4 (MNIA) the chain is Cytoplasmic. A helical; Signal-anchor for type II membrane protein membrane pass occupies residues 5–25 (AVFNALLVSVLATVLWKYIKL). The Lumenal portion of the chain corresponds to 26-577 (REHAFMVEEE…PFADVLLCST (552 aa)). Asparagine 98, asparagine 275, asparagine 335, and asparagine 540 each carry an N-linked (GlcNAc...) asparagine glycan. The Fibronectin type-III domain occupies 481–577 (KVRDARCQAS…PFADVLLCST (97 aa)).

Belongs to the glycosyltransferase 61 family.

Its subcellular location is the endoplasmic reticulum membrane. It catalyses the reaction 3-O-(alpha-D-mannosyl)-L-threonyl-[protein] + UDP-N-acetyl-alpha-D-glucosamine = 3-O-(N-acetyl-beta-D-glucosaminyl-(1-&gt;4)-alpha-D-mannosyl)-L-threonyl-[protein] + UDP + H(+). It functions in the pathway protein modification; protein glycosylation. In terms of biological role, O-linked mannose beta-1,4-N-acetylglucosaminyltransferase that transfers UDP-N-acetyl-D-glucosamine to the 4-position of the mannose to generate N-acetyl-D-glucosamine-beta-1,4-O-D-mannosylprotein. Involved in the biosynthesis of the phosphorylated O-mannosyl trisaccharide (N-acetylgalactosamine-beta-3-N-acetylglucosamine-beta-4-(phosphate-6-)mannose), a carbohydrate structure present in alpha-dystroglycan (DAG1), which is required for binding laminin G-like domain-containing extracellular proteins with high affinity. The polypeptide is Protein O-linked-mannose beta-1,4-N-acetylglucosaminyltransferase 2 (POMGNT2) (Gallus gallus (Chicken)).